A 324-amino-acid polypeptide reads, in one-letter code: MTLSTLTSLMIMTLSYMIPILIAVAFLTLVERKILSYMQARKGPNIVGPFGLLQPIADGVKLFIKEPIRPSTSSPFLFILTPILALLLALTIWTPLPLPFPMTDLNLGLLFLLAMSSLTVYSLLWSGWASNSKYALIGALRAVAQTISYEVTLAIILLSTIMLSGNYTLSTLSITQEPMYLIFSSWPLTMMWYISTLAETNRAPFDLTEGESELVSGFNVEYAAGPFALFFLAEYANIMLMNTLTITLFLNPSFLSPPSELFSITLATKVLLLSSSFLWIRASYPRFRYDQLMHLLWKNFLPLTLAMCLWHTSMPISYAGLPPA.

Helical transmembrane passes span 10–30 (MIMTLSYMIPILIAVAFLTLV), 76–96 (FLFILTPILALLLALTIWTPL), 107–127 (LGLLFLLAMSSLTVYSLLWSG), 143–163 (VAQTISYEVTLAIILLSTIML), 178–198 (PMYLIFSSWPLTMMWYISTLA), 229–249 (LFFLAEYANIMLMNTLTITLF), 260–280 (ELFSITLATKVLLLSSSFLWI), and 300–320 (FLPLTLAMCLWHTSMPISYAG).

The protein belongs to the complex I subunit 1 family.

The protein localises to the mitochondrion inner membrane. It carries out the reaction a ubiquinone + NADH + 5 H(+)(in) = a ubiquinol + NAD(+) + 4 H(+)(out). In terms of biological role, core subunit of the mitochondrial membrane respiratory chain NADH dehydrogenase (Complex I) that is believed to belong to the minimal assembly required for catalysis. Complex I functions in the transfer of electrons from NADH to the respiratory chain. The immediate electron acceptor for the enzyme is believed to be ubiquinone. In Coturnix japonica (Japanese quail), this protein is NADH-ubiquinone oxidoreductase chain 1 (MT-ND1).